Reading from the N-terminus, the 603-residue chain is F-box only protein 46 (603 aa).

Residues 20–63 (YSQNQPRPPSAALKPSACPEPGGGAEPDHGPAHSENTPPALATE) are disordered. 2 positions are modified to phosphoserine; by ATM: serine 21 and serine 67. Disordered stretches follow at residues 111 to 163 (GGSR…PASA), 235 to 301 (EAQR…ARAK), 326 to 360 (LLAR…RDCG), and 396 to 440 (TVSP…AEGT). Over residues 152–163 (GPPAAEEGPASA) the composition is skewed to low complexity. At serine 338 the chain carries Phosphoserine. At threonine 347 the chain carries Phosphothreonine. 2 stretches are compositionally biased toward pro residues: residues 347-356 (TPPAPPPPPA) and 417-426 (DGPPEPPPAD). The region spanning 470-522 (RQYMLLLPEHVLVKIFSFLPTRALAALKCTCHHFKGIIEAFGVRATDSRWSRD) is the F-box domain.

As to quaternary structure, part of a SCF (SKP1-cullin-F-box) protein ligase complex SCF(FBXO46) composed of CUL1, SKP1, RBX1 and FBXO46. Phosphorylated by ATM in response to DNA damage, promoting ubiquitination and degradation by the SCF(FBXO31) complex. In terms of processing, ATM-phosphorylated FBXO46 is ubiquitinated and degradaded by the SCF(FBXO31) complex in response to DNA damage.

It participates in protein modification; protein ubiquitination. Functionally, substrate-recognition component of the SCF(FBXO46) protein ligase complex, which mediates the ubiquitination and degradation of target proteins. In absence of stress, the SCF(FBXO46) complex catalyzes ubiquitination and degradation of MTOR-phosphorylated FBXO31. The sequence is that of F-box only protein 46 from Homo sapiens (Human).